Here is a 258-residue protein sequence, read N- to C-terminus: Imidazole glycerol phosphate synthase subunit HisF (258 aa).

Residues Asp12 and Asp131 contribute to the active site.

The protein belongs to the HisA/HisF family. In terms of assembly, heterodimer of HisH and HisF.

The protein localises to the cytoplasm. It catalyses the reaction 5-[(5-phospho-1-deoxy-D-ribulos-1-ylimino)methylamino]-1-(5-phospho-beta-D-ribosyl)imidazole-4-carboxamide + L-glutamine = D-erythro-1-(imidazol-4-yl)glycerol 3-phosphate + 5-amino-1-(5-phospho-beta-D-ribosyl)imidazole-4-carboxamide + L-glutamate + H(+). It functions in the pathway amino-acid biosynthesis; L-histidine biosynthesis; L-histidine from 5-phospho-alpha-D-ribose 1-diphosphate: step 5/9. Its function is as follows. IGPS catalyzes the conversion of PRFAR and glutamine to IGP, AICAR and glutamate. The HisF subunit catalyzes the cyclization activity that produces IGP and AICAR from PRFAR using the ammonia provided by the HisH subunit. This is Imidazole glycerol phosphate synthase subunit HisF from Nitrosomonas eutropha (strain DSM 101675 / C91 / Nm57).